Reading from the N-terminus, the 357-residue chain is S-adenosyl-L-methionine:benzoic acid/salicylic acid carboxyl methyltransferase 3 (357 aa).

Position 18 (Tyr18) interacts with S-adenosyl-L-homocysteine. Benzoate is bound at residue Gln25. Positions 59, 64, 96, 97, 135, and 136 each coordinate S-adenosyl-L-homocysteine. Benzoate is bound at residue Trp157. Mg(2+)-binding residues include Asn168, Asp254, Phe256, and Asn257. Gln260 is a binding site for benzoate.

This sequence belongs to the methyltransferase superfamily. Type-7 methyltransferase family.

The catalysed reaction is benzoate + S-adenosyl-L-methionine = methyl benzoate + S-adenosyl-L-homocysteine. It participates in aromatic compound metabolism. Functionally, converts benzoic acid into the volatile ester methyl benzoates. This scent, mostly produced in a rhythmical, diurnal manner, attracts the pollinators. This is S-adenosyl-L-methionine:benzoic acid/salicylic acid carboxyl methyltransferase 3 from Petunia hybrida (Petunia).